We begin with the raw amino-acid sequence, 257 residues long: Urease accessory protein UreD (257 aa).

The protein belongs to the UreD family. As to quaternary structure, ureD, UreF and UreG form a complex that acts as a GTP-hydrolysis-dependent molecular chaperone, activating the urease apoprotein by helping to assemble the nickel containing metallocenter of UreC. The UreE protein probably delivers the nickel.

The protein resides in the cytoplasm. Functionally, required for maturation of urease via the functional incorporation of the urease nickel metallocenter. This is Urease accessory protein UreD from Ruegeria pomeroyi (strain ATCC 700808 / DSM 15171 / DSS-3) (Silicibacter pomeroyi).